A 148-amino-acid chain; its full sequence is NADPH-dependent 7-cyano-7-deazaguanine reductase (148 aa).

The Thioimide intermediate role is filled by cysteine 50. Aspartate 57 serves as the catalytic Proton donor. Substrate is bound by residues 72–74 and 91–92; these read VES and HE.

Belongs to the GTP cyclohydrolase I family. QueF type 1 subfamily.

The protein localises to the cytoplasm. It catalyses the reaction 7-aminomethyl-7-carbaguanine + 2 NADP(+) = 7-cyano-7-deazaguanine + 2 NADPH + 3 H(+). Its pathway is tRNA modification; tRNA-queuosine biosynthesis. Functionally, catalyzes the NADPH-dependent reduction of 7-cyano-7-deazaguanine (preQ0) to 7-aminomethyl-7-deazaguanine (preQ1). The protein is NADPH-dependent 7-cyano-7-deazaguanine reductase of Helicobacter pylori (strain G27).